Here is a 438-residue protein sequence, read N- to C-terminus: tRNA modification GTPase MnmE (438 aa).

Residues arginine 21, glutamate 79, and lysine 118 each contribute to the (6S)-5-formyl-5,6,7,8-tetrahydrofolate site. Residues 215-362 enclose the TrmE-type G domain; it reads GFSIVLIGAP…LEARIEQIVR (148 aa). Position 225 (asparagine 225) interacts with K(+). GTP is bound by residues 225–230, 244–250, and 269–272; these read NAGKSS, TDIPGTT, and DTAG. Serine 229 is a Mg(2+) binding site. Residues threonine 244, isoleucine 246, and threonine 249 each coordinate K(+). Threonine 250 serves as a coordination point for Mg(2+). A (6S)-5-formyl-5,6,7,8-tetrahydrofolate-binding site is contributed by lysine 438.

Belongs to the TRAFAC class TrmE-Era-EngA-EngB-Septin-like GTPase superfamily. TrmE GTPase family. In terms of assembly, homodimer. Heterotetramer of two MnmE and two MnmG subunits. K(+) serves as cofactor.

It localises to the cytoplasm. Exhibits a very high intrinsic GTPase hydrolysis rate. Involved in the addition of a carboxymethylaminomethyl (cmnm) group at the wobble position (U34) of certain tRNAs, forming tRNA-cmnm(5)s(2)U34. The protein is tRNA modification GTPase MnmE of Maricaulis maris (strain MCS10) (Caulobacter maris).